Reading from the N-terminus, the 143-residue chain is S-protein homolog 11 (143 aa).

Positions 1–20 are cleaved as a signal peptide; it reads MNCFSFSFIIIVLCAGSSNA.

It belongs to the plant self-incompatibility (S1) protein family.

Its subcellular location is the secreted. The protein is S-protein homolog 11 of Arabidopsis thaliana (Mouse-ear cress).